We begin with the raw amino-acid sequence, 141 residues long: Large ribosomal subunit protein uL11 (141 aa).

The protein belongs to the universal ribosomal protein uL11 family. Part of the ribosomal stalk of the 50S ribosomal subunit. Interacts with L10 and the large rRNA to form the base of the stalk. L10 forms an elongated spine to which L12 dimers bind in a sequential fashion forming a multimeric L10(L12)X complex. In terms of processing, one or more lysine residues are methylated.

In terms of biological role, forms part of the ribosomal stalk which helps the ribosome interact with GTP-bound translation factors. The sequence is that of Large ribosomal subunit protein uL11 from Limosilactobacillus fermentum (strain NBRC 3956 / LMG 18251) (Lactobacillus fermentum).